The chain runs to 951 residues: Metal transporter CNNM1 (951 aa).

The chain crosses the membrane as a helical span at residues alanine 23–leucine 43. Positions glycine 116–glutamate 135 are disordered. Residues leucine 218 to glutamate 414 enclose the CNNM transmembrane domain. The next 3 membrane-spanning stretches (helical) occupy residues alanine 222–leucine 242, leucine 282–tyrosine 302, and isoleucine 321–isoleucine 341. 2 consecutive CBS domains span residues leucine 433–leucine 495 and tyrosine 502–glutamate 568. Polar residues-rich tracts occupy residues serine 731–glutamate 740 and lysine 814–threonine 824. 2 disordered regions span residues serine 731–asparagine 753 and methionine 795–alanine 830. 2 positions are modified to phosphothreonine: threonine 821 and threonine 824. Serine 850 bears the Phosphoserine mark. The segment at lysine 920–threonine 951 is disordered. Polar residues predominate over residues aspartate 942–threonine 951.

It belongs to the ACDP family. Restricted to brain and testis.

It localises to the cell membrane. Its function is as follows. Probable metal transporter. The chain is Metal transporter CNNM1 (CNNM1) from Homo sapiens (Human).